The chain runs to 274 residues: Formamidopyrimidine-DNA glycosylase (274 aa).

P2 functions as the Schiff-base intermediate with DNA in the catalytic mechanism. Catalysis depends on E3, which acts as the Proton donor. The active-site Proton donor; for beta-elimination activity is the K58. DNA contacts are provided by H92 and R111. The segment at 239-273 (HVYGREGEPCERCGTIIEKIKVAQRGTHFCPLEQR) adopts an FPG-type; degenerate zinc-finger fold. R263 functions as the Proton donor; for delta-elimination activity in the catalytic mechanism.

The protein belongs to the FPG family. In terms of assembly, monomer. The cofactor is Zn(2+).

The catalysed reaction is Hydrolysis of DNA containing ring-opened 7-methylguanine residues, releasing 2,6-diamino-4-hydroxy-5-(N-methyl)formamidopyrimidine.. It carries out the reaction 2'-deoxyribonucleotide-(2'-deoxyribose 5'-phosphate)-2'-deoxyribonucleotide-DNA = a 3'-end 2'-deoxyribonucleotide-(2,3-dehydro-2,3-deoxyribose 5'-phosphate)-DNA + a 5'-end 5'-phospho-2'-deoxyribonucleoside-DNA + H(+). Its function is as follows. Involved in base excision repair of DNA damaged by oxidation or by mutagenic agents. Acts as a DNA glycosylase that recognizes and removes damaged bases. Has a preference for oxidized purines, such as 7,8-dihydro-8-oxoguanine (8-oxoG). Has AP (apurinic/apyrimidinic) lyase activity and introduces nicks in the DNA strand. Cleaves the DNA backbone by beta-delta elimination to generate a single-strand break at the site of the removed base with both 3'- and 5'-phosphates. The sequence is that of Formamidopyrimidine-DNA glycosylase from Lactiplantibacillus plantarum (strain ATCC BAA-793 / NCIMB 8826 / WCFS1) (Lactobacillus plantarum).